We begin with the raw amino-acid sequence, 382 residues long: V-type proton ATPase subunit C 1 (382 aa).

Residue T2 is modified to N-acetylthreonine.

This sequence belongs to the V-ATPase C subunit family. In terms of assembly, V-ATPase is a heteromultimeric enzyme made up of two complexes: the ATP-hydrolytic V1 complex and the proton translocation V0 complex. The V1 complex consists of three catalytic AB heterodimers that form a heterohexamer, three peripheral stalks each consisting of EG heterodimers, one central rotor including subunits D and F, and the regulatory subunits C and H. The proton translocation complex V0 consists of the proton transport subunit a, a ring of proteolipid subunits c9c'', rotary subunit d, subunits e and f, and two accessory subunits.

In terms of biological role, subunit of the V1 complex of vacuolar(H+)-ATPase (V-ATPase), a multisubunit enzyme composed of a peripheral complex (V1) that hydrolyzes ATP and a membrane integral complex (V0) that translocates protons. V-ATPase is responsible for acidifying and maintaining the pH of intracellular compartments and in some cell types, is targeted to the plasma membrane, where it is responsible for acidifying the extracellular environment. Subunit C is necessary for the assembly of the catalytic sector of the enzyme and is likely to have a specific function in its catalytic activity. The sequence is that of V-type proton ATPase subunit C 1 (atp6v1c1) from Xenopus tropicalis (Western clawed frog).